A 292-amino-acid chain; its full sequence is Transcription factor-like protein DPA (292 aa).

Residues 1–25 (MSMEMELFVTPEKQRQHPSVSVEKT) form a disordered region. The DNA-binding element occupies 51-135 (GGGLRQFSVM…KKEIRWKGLP (85 aa)). The DEF box signature appears at 101–135 (NEKNIRRRVYDALNVFMALDIIARDKKEIRWKGLP). Positions 163–184 (LKELREKVSSLESLMSRNQEMV) form a coiled coil. The interval 246 to 280 (QEQNRVSSSSSTHHQSQHSSAHSSSSSCIASGTSG) is disordered. A compositionally biased stretch (low complexity) spans 252 to 280 (SSSSSTHHQSQHSSAHSSSSSCIASGTSG).

This sequence belongs to the E2F/DP family. In terms of assembly, heterodimer with E2F. Interacts preferentially with E2FA and E2FB, but also with E2FC. As to expression, strongly expressed in the actively dividing tissues of the shoot apical meristem, young leaf primordia, the vascular tissues of the maturing leaf primordia and axillary buds.

Its subcellular location is the cytoplasm. It localises to the nucleus. Its function is as follows. Involved in the regulation of the G1/S transition. Increases the DNA binding and the transactivation activities of E2F proteins after heterodimerization. The complex DPA/E2FA promotes cell division and acts as a regulator of the endocycle. Positively regulates the activity of S phase-specific genes. In Arabidopsis thaliana (Mouse-ear cress), this protein is Transcription factor-like protein DPA (DPA).